The following is a 289-amino-acid chain: tRNA U34 carboxymethyltransferase (289 aa).

Carboxy-S-adenosyl-L-methionine-binding positions include lysine 60, tryptophan 74, lysine 79, glycine 98, 120-122, 147-148, tyrosine 167, and arginine 282; these read DPS and VE.

It belongs to the class I-like SAM-binding methyltransferase superfamily. CmoB family. As to quaternary structure, homotetramer.

It catalyses the reaction carboxy-S-adenosyl-L-methionine + 5-hydroxyuridine(34) in tRNA = 5-carboxymethoxyuridine(34) in tRNA + S-adenosyl-L-homocysteine + H(+). Functionally, catalyzes carboxymethyl transfer from carboxy-S-adenosyl-L-methionine (Cx-SAM) to 5-hydroxyuridine (ho5U) to form 5-carboxymethoxyuridine (cmo5U) at position 34 in tRNAs. This Campylobacter concisus (strain 13826) protein is tRNA U34 carboxymethyltransferase.